A 654-amino-acid polypeptide reads, in one-letter code: Arrestin domain-containing protein C (654 aa).

Residues 1–105 enclose the C2 domain; it reads MTQRSLKINI…AKRNLMDQWL (105 aa). Residues 616 to 647 adopt a coiled-coil conformation; it reads AKRIFLKIQQIQSERQKQQEQQEQQVVSNLEA.

This sequence belongs to the arrestin family.

In Dictyostelium discoideum (Social amoeba), this protein is Arrestin domain-containing protein C (adcC).